A 30-amino-acid chain; its full sequence is Brevinin-2Rj (30 aa).

A disulfide bridge links C24 with C30.

In terms of tissue distribution, expressed by the skin glands.

The protein localises to the secreted. In terms of biological role, antimicrobial peptide. The chain is Brevinin-2Rj from Pelophylax ridibundus (Marsh frog).